We begin with the raw amino-acid sequence, 96 residues long: Small ribosomal subunit protein bS20 (96 aa).

The disordered stretch occupies residues 1–27 (MAKQEVAAKKVKRPTALKRDLQNKKKR).

Belongs to the bacterial ribosomal protein bS20 family.

In terms of biological role, binds directly to 16S ribosomal RNA. The protein is Small ribosomal subunit protein bS20 of Protochlamydia amoebophila (strain UWE25).